The following is a 698-amino-acid chain: MLPARLPFRLLSLFLRGSAPTAARHGLREPLLERRCAAASSFQHSSSLGRELPYDPVDTEGFGEGGDMQERFLFPEYILDPEPQPTREKQLQELQQQQEEEERQRQQRREERRQQNLRARSREHPVVGHPDPALPPSGVNCSGCGAELHCQDAGVPGYLPREKFLRTAEADGGLARTVCQRCWLLSHHRRALRLQVSREQYLELVSAALRRPGPSLVLYMVDLLDLPDALLPDLPALVGPKQLIVLGNKVDLLPQDAPGYRQRLRERLWEDCARAGLLLAPGHQGPQRPVKDEPQDGENPNPPNWSRTVVRDVRLISAKTGYGVEELISALQRSWRYRGDVYLVGATNAGKSTLFNTLLESDYCTAKGSEAIDRATISPWPGTTLNLLKFPICNPTPYRMFKRHQRLKKDSTQAEEDLSEQEQNQLNVLKKHGYVVGRVGRTFLYSEEQKDNIPFEFDADSLAFDMENDPVMGTHKSTKQVELTAQDVKDAHWFYDTPGITKENCILNLLTEKEVNIVLPTQSIVPRTFVLKPGMVLFLGAIGRIDFLQGNQSAWFTVVASNILPVHITSLDRADALYQKHAGHTLLQIPMGGKERMAGFPPLVAEDIMLKEGLGASEAVADIKFSSAGWVSVTPNFKDRLHLRGYTPEGTVLTVRPPLLPYIVNIKGQRIKKSVAYKTKKPPSLMYNVRKKKGKINV.

Residues 42-66 (FQHSSSLGRELPYDPVDTEGFGEGG) are disordered. The residue at position 77 (Tyr-77) is a Phosphotyrosine. Disordered stretches follow at residues 80–134 (DPEP…DPAL) and 279–306 (LAPG…PNWS). Basic and acidic residues predominate over residues 102–126 (ERQRQQRREERRQQNLRARSREHPV). In terms of domain architecture, CP-type G spans 202-503 (LELVSAALRR…FYDTPGITKE (302 aa)).

This sequence belongs to the TRAFAC class YlqF/YawG GTPase family. NOA1 subfamily. In terms of assembly, homodimer or multimer. Interacts with mitochondrial complex I, DAP3, MRPL12 and MRPS27.

Its subcellular location is the mitochondrion inner membrane. Functionally, involved in regulation of mitochondrial protein translation and respiration. Plays a role in mitochondria-mediated cell death. May act as a scaffolding protein or stabilizer of respiratory chain supercomplexes. Binds GTP. This chain is Nitric oxide-associated protein 1 (NOA1), found in Homo sapiens (Human).